Here is a 725-residue protein sequence, read N- to C-terminus: Ophiobolin F synthase (725 aa).

The segment at 1-322 is (7Z)-ophiobola-7,19-dien-3-ol synthase; that stretch reads MEYKYSTIVD…RYHADAKFNE (322 aa). 2 residues coordinate Mg(2+): Asp-93 and Asp-97. Asp-93 is a binding site for substrate. The short motif at 93 to 97 is the DDXXD 1 element; sequence DDEID. Residues 182–185, Asn-226, 230–234, and 313–314 contribute to the substrate site; these read RCMD, SYEKE, and RY. The NSE/DTE motif lies at 226–234; it reads NDLFSYEKE. The segment at 323–725 is geranylfarnesyl diphosphate synthase; sequence LQMLRAEHGV…LRMMLELLKV (403 aa). The interval 362 to 388 is disordered; sequence GVNGVNGKRKRSGEETADDARTNGNGI. Residues 373–382 show a composition bias toward basic and acidic residues; that stretch reads SGEETADDAR. Positions 436, 439, and 468 each coordinate isopentenyl diphosphate. Mg(2+)-binding residues include Asp-475 and Asp-479. The DDXXD 2 motif lies at 475–479; the sequence is DDIED. Arg-484 provides a ligand contact to dimethylallyl diphosphate. Arg-485 is an isopentenyl diphosphate binding site. Dimethylallyl diphosphate is bound by residues Lys-562, Thr-563, Gln-601, Asn-608, Lys-618, and Lys-628.

It in the N-terminal section; belongs to the terpene synthase family. This sequence in the C-terminal section; belongs to the FPP/GGPP synthase family. The cofactor is Mg(2+).

It carries out the reaction isopentenyl diphosphate + (2E,6E)-farnesyl diphosphate = (2E,6E,10E)-geranylgeranyl diphosphate + diphosphate. The catalysed reaction is isopentenyl diphosphate + (2E,6E,10E)-geranylgeranyl diphosphate = (2E,6E,10E,14E)-geranylfarnesyl diphosphate + diphosphate. It catalyses the reaction (2E,6E,10E,14E)-geranylfarnesyl diphosphate + H2O = ophiobolin F + diphosphate. It functions in the pathway secondary metabolite biosynthesis; terpenoid biosynthesis. Functionally, bifunctional sesterterpene synthase that converts isopentenyl diphosphate (IPP) and dimethylallyl diphosphate (DMAPP) into ophiobolin F. The C-terminal prenyltransferase (PT) domain of AcldOS converts isopentenyl diphosphate and dimethylallyl diphosphate into geranylfarnesyl diphosphate (GFPP), whereas the N-terminal terpene cyclase (TC) domain catalyzes the cyclization of GFPP to ophiobolin F. This Aspergillus calidoustus protein is Ophiobolin F synthase.